The following is a 161-amino-acid chain: Cytochrome b6-f complex subunit 4 (161 aa).

3 consecutive transmembrane segments (helical) span residues 37-57, 96-116, and 132-152; these read LLYIFPVVILGSIALCVGLAV, LLGVVLMGSIPLGLMLVPFIE, and TVFLFGTLFTLWLGIGATFPI.

The protein belongs to the cytochrome b family. PetD subfamily. As to quaternary structure, the 4 large subunits of the cytochrome b6-f complex are cytochrome b6, subunit IV (17 kDa polypeptide, PetD), cytochrome f and the Rieske protein, while the 4 small subunits are PetG, PetL, PetM and PetN. The complex functions as a dimer.

It is found in the cellular thylakoid membrane. Functionally, component of the cytochrome b6-f complex, which mediates electron transfer between photosystem II (PSII) and photosystem I (PSI), cyclic electron flow around PSI, and state transitions. The chain is Cytochrome b6-f complex subunit 4 from Cyanothece sp. (strain PCC 7425 / ATCC 29141).